A 194-amino-acid polypeptide reads, in one-letter code: dCTP deaminase, dUMP-forming (194 aa).

Residues 105–110 (RSSMGR), Asp123, 131–133 (TLE), Gln152, Tyr166, Lys174, and Gln178 each bind dCTP. The active-site Proton donor/acceptor is the Glu133.

Belongs to the dCTP deaminase family. Homotrimer.

The catalysed reaction is dCTP + 2 H2O = dUMP + NH4(+) + diphosphate. Its pathway is pyrimidine metabolism; dUMP biosynthesis; dUMP from dCTP: step 1/1. Bifunctional enzyme that catalyzes both the deamination of dCTP to dUTP and the hydrolysis of dUTP to dUMP without releasing the toxic dUTP intermediate. The protein is dCTP deaminase, dUMP-forming of Methanobrevibacter smithii (strain ATCC 35061 / DSM 861 / OCM 144 / PS).